Consider the following 175-residue polypeptide: Bifunctional protein PyrR (175 aa).

A PRPP-binding motif is present at residues 98-110 (VIIIDDVLYTGRT).

This sequence belongs to the purine/pyrimidine phosphoribosyltransferase family. PyrR subfamily. In terms of assembly, homodimer and homohexamer; in equilibrium.

It carries out the reaction UMP + diphosphate = 5-phospho-alpha-D-ribose 1-diphosphate + uracil. Its function is as follows. Regulates transcriptional attenuation of the pyrimidine nucleotide (pyr) operon by binding in a uridine-dependent manner to specific sites on pyr mRNA. This disrupts an antiterminator hairpin in the RNA and favors formation of a downstream transcription terminator, leading to a reduced expression of downstream genes. Functionally, also displays a weak uracil phosphoribosyltransferase activity which is not physiologically significant. The protein is Bifunctional protein PyrR of Staphylococcus aureus (strain bovine RF122 / ET3-1).